The primary structure comprises 322 residues: MTSHLKKVELHCHLEGAAPPALTAAQARKYGVDISAELRDGAYVWHDFASFLVCYDKVSEVYRTEEDYALLTETYLDELAGIDTIYSELIVSPDHGKRIGLGADAYISGICEGIRRAREKSGIEARLIVTGERHFGPESVIGAAEYAARAANPLITGFNLAGEERMGRVADYARAFDIARDAGLGLTIHAGEVCGAFSVADALDAVRPSRIGHGVRAIEDLDLVTRLADLGTVLEICPGSNIALGVFPDFASHPLRRLKDAGVRVTISSDDPPFFHTSLKREYELAAGTFGFGDAEIDAMTRTAIEAAFVDDETRKALLARI.

3 residues coordinate Zn(2+): histidine 11, histidine 13, and histidine 189. The Proton donor role is filled by glutamate 192. Aspartate 270 is a binding site for Zn(2+). Residue aspartate 271 coordinates substrate.

Belongs to the metallo-dependent hydrolases superfamily. Adenosine and AMP deaminases family. Adenine deaminase type 2 subfamily. The cofactor is Zn(2+).

It carries out the reaction adenine + H2O + H(+) = hypoxanthine + NH4(+). Functionally, catalyzes the hydrolytic deamination of adenine to hypoxanthine. Plays an important role in the purine salvage pathway and in nitrogen catabolism. The protein is Adenine deaminase of Rhizobium johnstonii (strain DSM 114642 / LMG 32736 / 3841) (Rhizobium leguminosarum bv. viciae).